Here is a 565-residue protein sequence, read N- to C-terminus: NAD-dependent malic enzyme (565 aa).

The active-site Proton donor is the tyrosine 104. Residue arginine 157 coordinates NAD(+). Lysine 175 acts as the Proton acceptor in catalysis. Residues glutamate 246, aspartate 247, and aspartate 270 each contribute to the a divalent metal cation site. Residues aspartate 270 and asparagine 418 each contribute to the NAD(+) site.

The protein belongs to the malic enzymes family. As to quaternary structure, homotetramer. Mg(2+) is required as a cofactor. The cofactor is Mn(2+).

It carries out the reaction (S)-malate + NAD(+) = pyruvate + CO2 + NADH. The catalysed reaction is oxaloacetate + H(+) = pyruvate + CO2. In Salmonella newport (strain SL254), this protein is NAD-dependent malic enzyme.